The primary structure comprises 1182 residues: MAQQKPEWGNQMKNEGLDDMTLLSKVSNDQILDNLKKRFEKDIIYTNIGDVLISVNPFKFIDGMYSDEVLQEYIGKSRIELPPHVFAVAEQTYRSMINEKENQCVIISGESGAGKTEAAKKIMQYIADVSGERGSSSNQKVEHVKSIILETNPLLEAFGNAKTLRNNNSSRFGKYFEIQFNQKNEPEGGKITNYLLEKSRVVFQLKGERNFHIFYQFCRGATPQEQQEFGIYGPENFAYLTKGDTLDIDGVDDVEEFALTRNAMNVIGIPANEQKQIFKLLAAILWIGNIDFKEQAGDKVTIADTSVLDFVSQLLDVPSHFLKTALEFRQMETRHGNQRGTQYNVPLNKTQAIAGRDALAKAIYDRLFNWLVDRINKEMDNPQKGLMIGVLDIYGFEVFDRNGFEQFCINYVNEKLQQIFIEFTLKMEQEEYVREGIKWEPIPFFDNKIVCELIEGKNPPGIFSILDDVCRAVHSQAEGADQKLLQSIAVCKSNPHFDTRGNAFCVKHYAGDVVYEGPGMIEKNKDTLLKDHLEILQMSANNFLVGLFPDVIDTDSKKLPSTAGFKIKSQAAELVATLMKSTPHYIRTIKPNDLKKPNILEGGRVLHQVKYLGLLDNIKVRRAGFAYRATFDRFFQRYYLLSDKTCYAGNNIWKGDALSACRAILASQNVDNTQYQIGKTKIFIRYPEMLFSLEETRERYWHDMASRIKNAYRNYKAFQFECSNRIKNAFRNYKLYRQRCAQTIQGYFRAWKQASPFFDLRMQNEQLFQGRKERNRFSMISVRKYFGDYLDVRSQSYFLDAMAEGRNEDVIFSSKSQVMVHPILSANKLSPRFLIVTKQAIYLIKLKQKKNLATYLLDRRVPLAEVTSFSLSSLADNLLVIHTSTQFDVAVTTEFKTELVALINKQKGTTLAVNFGQSIQYFKKKGSNNTVTFLKDEMHKEIFLKKNQFHIASGLPASTTVAKVRKNPSQVSTPSKPIAKPVAKPMVAKPSGGSVIMKKPAPAAPPSGPPVMKKPAPTAPGGAPMMKKPAPAPGGAPMMKKPAPVPGGPAPGGSAIMKPAGGVSKPLPSPTGAPMMKKPAPTAPGGPAPAGAPTPMMKKPAGQPMMKPIAKPQPTPMKKPAAPPPQQYIALYEYDAMQPDELTFKENDVINLIKKVDADWWQGELVRTKQIGMLPSNYVQQI.

One can recognise a Myosin motor domain in the interval 15–698 (EGLDDMTLLS…MLFSLEETRE (684 aa)). An ATP-binding site is contributed by 109–116 (GESGAGKT). The tract at residues 571–593 (AAELVATLMKSTPHYIRTIKPND) is actin-binding. The 184-residue stretch at 774 to 957 (RNRFSMISVR…QFHIASGLPA (184 aa)) folds into the TH1 domain. Disordered regions lie at residues 999-1052 (KPAP…PAPG) and 1064-1103 (SKPLPSPTGAPMMKKPAPTAPGGPAPAGAPTPMMKKPAGQ). Positions 1013-1042 (KKPAPTAPGGAPMMKKPAPAPGGAPMMKKP) are enriched in low complexity. Residues 1081-1092 (PTAPGGPAPAGA) show a composition bias toward pro residues. The 60-residue stretch at 1123–1182 (PPPQQYIALYEYDAMQPDELTFKENDVINLIKKVDADWWQGELVRTKQIGMLPSNYVQQI) folds into the SH3 domain.

It belongs to the TRAFAC class myosin-kinesin ATPase superfamily. Myosin family. Myosin I heavy chain is single-headed. Dimer of a heavy and a light chain. Inability to self-assemble into filaments.

It is found in the cell projection. Its subcellular location is the lamellipodium. Its function is as follows. Myosin is a protein that binds to actin and has ATPase activity that is activated by actin. Involved in the process of phagocytosis and appears to support streaming behavior. This chain is Myosin IC heavy chain (myoC), found in Dictyostelium discoideum (Social amoeba).